Reading from the N-terminus, the 376-residue chain is TelA-like protein SE_1089 (376 aa).

It belongs to the TelA family.

The chain is TelA-like protein SE_1089 from Staphylococcus epidermidis (strain ATCC 12228 / FDA PCI 1200).